The sequence spans 307 residues: Protein EI24 homolog (307 aa).

2 helical membrane passes run Phe-53–Tyr-73 and Met-92–Ala-112. Asn-135 carries an N-linked (GlcNAc...) asparagine glycan. A run of 4 helical transmembrane segments spans residues Leu-153–Ile-173, Phe-175–Gly-195, Phe-225–Ile-245, and Gly-260–Leu-280.

Belongs to the EI24 family.

The protein localises to the membrane. The polypeptide is Protein EI24 homolog (Dictyostelium discoideum (Social amoeba)).